We begin with the raw amino-acid sequence, 685 residues long: Serine/threonine-protein kinase PLK2 (685 aa).

The disordered stretch occupies residues 24 to 71 (KGCGADSKKKRPPQPPEESQPPQSQAQVPPAAAHHHHHHSHSGPEISR). A compositionally biased stretch (low complexity) spans 43-55 (QPPQSQAQVPPAA). The 253-residue stretch at 82–334 (YCRGKVLGKG…LDDIIRHDFF (253 aa)) folds into the Protein kinase domain. ATP-binding positions include 88–96 (LGKGGFAKC) and Lys-111. Asp-205 acts as the Proton acceptor in catalysis. Thr-239 is subject to Phosphothreonine. Residues 406–433 (SITQQPSKHRTDEELQPPTTTVARSGTP) form a disordered region. POLO box domains lie at 503 to 581 (WVTK…YMEE) and 601 to 685 (YLLQ…QRCN).

It belongs to the protein kinase superfamily. Ser/Thr protein kinase family. CDC5/Polo subfamily. As to quaternary structure, interacts with NSF; causing NSF dissociation from GRIA2. Interacts with CIB1. Post-translationally, catalytic activity is enhanced by phosphorylation of Thr-239.

It localises to the cytoplasm. It is found in the cytoskeleton. The protein localises to the microtubule organizing center. The protein resides in the centrosome. Its subcellular location is the centriole. It localises to the cell projection. It is found in the dendrite. It catalyses the reaction L-seryl-[protein] + ATP = O-phospho-L-seryl-[protein] + ADP + H(+). The enzyme catalyses L-threonyl-[protein] + ATP = O-phospho-L-threonyl-[protein] + ADP + H(+). Its activity is regulated as follows. Activated by phosphorylation of Thr-239. Once activated, activity is stimulated by binding target proteins. Its function is as follows. Tumor suppressor serine/threonine-protein kinase involved in synaptic plasticity, centriole duplication and G1/S phase transition. Polo-like kinases act by binding and phosphorylating proteins that are already phosphorylated on a specific motif recognized by the POLO box domains. Phosphorylates CPAP, NPM1, RAPGEF2, RASGRF1, SNCA, SIPA1L1 and SYNGAP1. Plays a key role in synaptic plasticity and memory by regulating the Ras and Rap protein signaling: required for overactivity-dependent spine remodeling by phosphorylating the Ras activator RASGRF1 and the Rap inhibitor SIPA1L1 leading to their degradation by the proteasome. Conversely, phosphorylates the Rap activator RAPGEF2 and the Ras inhibitor SYNGAP1, promoting their activity. Also regulates synaptic plasticity independently of kinase activity, via its interaction with NSF that disrupts the interaction between NSF and the GRIA2 subunit of AMPARs, leading to a rapid rundown of AMPAR-mediated current that occludes long term depression. Required for procentriole formation and centriole duplication by phosphorylating CPAP and NPM1, respectively. Its induction by p53/TP53 suggests that it may participate in the mitotic checkpoint following stress. The polypeptide is Serine/threonine-protein kinase PLK2 (PLK2) (Pongo abelii (Sumatran orangutan)).